The primary structure comprises 619 residues: 1-deoxy-D-xylulose-5-phosphate synthase (619 aa).

Thiamine diphosphate is bound by residues His-74 and 115-117 (GHS). Position 146 (Asp-146) interacts with Mg(2+). Thiamine diphosphate-binding positions include 147–148 (GA), Asn-175, and Tyr-285. Asn-175 serves as a coordination point for Mg(2+). Residues 289 to 312 (EKSPSKYHAVPPRANEKEKPSKPC) form a disordered region. The span at 302 to 312 (ANEKEKPSKPC) shows a compositional bias: basic and acidic residues. Glu-365 is a binding site for thiamine diphosphate.

It belongs to the transketolase family. DXPS subfamily. Homodimer. It depends on Mg(2+) as a cofactor. Thiamine diphosphate serves as cofactor.

It carries out the reaction D-glyceraldehyde 3-phosphate + pyruvate + H(+) = 1-deoxy-D-xylulose 5-phosphate + CO2. The protein operates within metabolic intermediate biosynthesis; 1-deoxy-D-xylulose 5-phosphate biosynthesis; 1-deoxy-D-xylulose 5-phosphate from D-glyceraldehyde 3-phosphate and pyruvate: step 1/1. In terms of biological role, catalyzes the acyloin condensation reaction between C atoms 2 and 3 of pyruvate and glyceraldehyde 3-phosphate to yield 1-deoxy-D-xylulose-5-phosphate (DXP). The protein is 1-deoxy-D-xylulose-5-phosphate synthase of Clostridium botulinum (strain Eklund 17B / Type B).